The sequence spans 94 residues: Small ribosomal subunit protein bS18 (94 aa).

Residues 1-12 show a composition bias toward low complexity; it reads MSEQNSRPQNSE. A disordered region spans residues 1–29; that stretch reads MSEQNSRPQNSERPQRSRRPQGGPRRRRK. Basic residues predominate over residues 16-29; it reads RSRRPQGGPRRRRK.

This sequence belongs to the bacterial ribosomal protein bS18 family. As to quaternary structure, part of the 30S ribosomal subunit. Forms a tight heterodimer with protein bS6.

In terms of biological role, binds as a heterodimer with protein bS6 to the central domain of the 16S rRNA, where it helps stabilize the platform of the 30S subunit. The sequence is that of Small ribosomal subunit protein bS18 from Leuconostoc citreum (strain KM20).